The chain runs to 150 residues: MRHKVAGYKLKRDTAGRNSLLRNLATSVIEAERIVTTVTKAKAVRPLVEHMITLAKTDTLHSRRQAAAVLRTPESVKKLFDTLGTRFGQRNGGYTRIVKLGPRKGDGAEQAMIELVGSELVKRAADRAKRREERLKAQREGRDHEEETDE.

Residues 126–150 form a disordered region; the sequence is DRAKRREERLKAQREGRDHEEETDE.

This sequence belongs to the bacterial ribosomal protein bL17 family. Part of the 50S ribosomal subunit. Contacts protein L32.

In Solibacter usitatus (strain Ellin6076), this protein is Large ribosomal subunit protein bL17.